The sequence spans 1199 residues: Major DNA-binding protein (1199 aa).

Residues 289–314 form a disordered region; it reads SGTTTARGARRNDVNSTSKPSPSGGF. The segment at 497–510 is a zinc-finger region; sequence CSLCEKHTRPVCAH. Short sequence motifs (required for filament formation) lie at residues 841–842 and 1146–1148; these read FW and FNF. Positions 1172 to 1199 are required for nuclear localization; the sequence is LKRPPEDDELFDLSGIPIKHGNITMEMI.

This sequence belongs to the herpesviridae major DNA-binding protein family. As to quaternary structure, homooligomers. Forms double-helical filaments necessary for the formation of replication compartments within the host nucleus. Interacts with the origin-binding protein. Interacts with the helicase primase complex; this interaction stimulates primer synthesis activity of the helicase-primase complex. Interacts with the DNA polymerase. Interacts with the alkaline exonuclease; this interaction increases its nuclease processivity.

It is found in the host nucleus. Its function is as follows. Plays several crucial roles in viral infection. Participates in the opening of the viral DNA origin to initiate replication by interacting with the origin-binding protein. May disrupt loops, hairpins and other secondary structures present on ssDNA to reduce and eliminate pausing of viral DNA polymerase at specific sites during elongation. Promotes viral DNA recombination by performing strand-transfer, characterized by the ability to transfer a DNA strand from a linear duplex to a complementary single-stranded DNA circle. Can also catalyze the renaturation of complementary single strands. Additionally, reorganizes the host cell nucleus, leading to the formation of prereplicative sites and replication compartments. This process is driven by the protein which can form double-helical filaments in the absence of DNA. The sequence is that of Major DNA-binding protein from Varicella-zoster virus (strain Oka vaccine) (HHV-3).